The primary structure comprises 176 residues: Peptide deformylase (176 aa).

Fe cation is bound by residues C97 and H139. E140 is a catalytic residue. Position 143 (H143) interacts with Fe cation.

This sequence belongs to the polypeptide deformylase family. Requires Fe(2+) as cofactor.

It carries out the reaction N-terminal N-formyl-L-methionyl-[peptide] + H2O = N-terminal L-methionyl-[peptide] + formate. In terms of biological role, removes the formyl group from the N-terminal Met of newly synthesized proteins. Requires at least a dipeptide for an efficient rate of reaction. N-terminal L-methionine is a prerequisite for activity but the enzyme has broad specificity at other positions. This Thermomicrobium roseum (strain ATCC 27502 / DSM 5159 / P-2) protein is Peptide deformylase.